Consider the following 57-residue polypeptide: Large ribosomal subunit protein bL32 (57 aa).

Positions 1-19 (MAVPKRRKSRSNTRSRRSQ) are enriched in basic residues. The segment at 1–22 (MAVPKRRKSRSNTRSRRSQWKA) is disordered.

This sequence belongs to the bacterial ribosomal protein bL32 family.

The sequence is that of Large ribosomal subunit protein bL32 from Mycobacterium tuberculosis (strain ATCC 25177 / H37Ra).